Here is a 634-residue protein sequence, read N- to C-terminus: CRISPR-associated protein MJ1674 (634 aa).

Functionally, CRISPR (clustered regularly interspaced short palindromic repeat) is an adaptive immune system that provides protection against mobile genetic elements (viruses, transposable elements and conjugative plasmids). CRISPR clusters contain spacers, sequences complementary to antecedent mobile elements, and target invading nucleic acids. CRISPR clusters are transcribed and processed into CRISPR RNA (crRNA). The type III Csm effector complex binds crRNA and acts as a crRNA-guided RNase, DNase and cyclic oligoadenylate synthase; binding of target RNA cognate to the crRNA is required for all activities. This chain is CRISPR-associated protein MJ1674, found in Methanocaldococcus jannaschii (strain ATCC 43067 / DSM 2661 / JAL-1 / JCM 10045 / NBRC 100440) (Methanococcus jannaschii).